We begin with the raw amino-acid sequence, 187 residues long: Cytochrome b-245 chaperone 1 (187 aa).

The chain crosses the membrane as a helical span at residues 20–42 (GIRSWSLLVGILSTGLAAAYYSG). The disordered stretch occupies residues 167 to 187 (ESPSERSQSSDSEPDGPGGQS). 2 positions are modified to phosphoserine: Ser168 and Ser170.

It belongs to the CYBC1 family. As to quaternary structure, interacts with CYBB; CYBC1 may act as a chaperone stabilizing Cytochrome b-245 heterodimer.

It is found in the endoplasmic reticulum membrane. Functionally, functions as a chaperone necessary for a stable expression of the CYBA and CYBB subunits of the cytochrome b-245 heterodimer. Controls the phagocyte respiratory burst and is essential for innate immunity. This is Cytochrome b-245 chaperone 1 from Rattus norvegicus (Rat).